The following is a 950-amino-acid chain: Protocadherin alpha-6 (950 aa).

Residues 1–29 (MVFTPEDRLGKQCLLLPLLLLAAWKVGSG) form the signal peptide. The Extracellular segment spans residues 30–697 (QLHYSVPEEA…GPEAALVDVN (668 aa)). Cadherin domains follow at residues 34 to 133 (SVPE…PPLF), 157 to 242 (ASDA…APNF), 243 to 350 (EQSE…VPEI), 351 to 455 (ALTS…APAF), 456 to 565 (AQPE…APAL), and 581 to 678 (VPRS…APKA). N-linked (GlcNAc...) asparagine glycans are attached at residues asparagine 257, asparagine 265, asparagine 386, and asparagine 548. A helical membrane pass occupies residues 698 to 718 (VYLIIAICAVSSLLVLTLLLY). The Cytoplasmic portion of the chain corresponds to 719–950 (TALRCSAPST…GNSTTDNSDQ (232 aa)). PXXP repeat units follow at residues 799 to 802 (PRQP), 832 to 835 (PGGP), 873 to 876 (PGNP), and 891 to 894 (PGSP). Residues 799–894 (PRQPNPDWRY…PDKFIIPGSP (96 aa)) are 4 X 4 AA repeats of P-X-X-P. Residues 830–889 (AGPGGPDQQWPTVSSATPEPEAGEVSPPVGAGVNSNSWTFKYGPGNPKQSGPGELPDKFI) form a disordered region. Residues 901-950 (QEPANSQIDKSDFITFGKKEETKKKKKKKKGNKTQEKKEKGNSTTDNSDQ) are disordered. The span at 909-923 (DKSDFITFGKKEETK) shows a compositional bias: basic and acidic residues.

The protein localises to the cell membrane. In terms of biological role, potential calcium-dependent cell-adhesion protein. May be involved in the establishment and maintenance of specific neuronal connections in the brain. The chain is Protocadherin alpha-6 (PCDHA6) from Pan troglodytes (Chimpanzee).